Here is a 266-residue protein sequence, read N- to C-terminus: ATP synthase subunit a (266 aa).

Transmembrane regions (helical) follow at residues 33 to 53 (FWTLNIDSMFFSVVLGLLFLA), 95 to 115 (VIAPLALTVFVWVFLMNLMDL), 141 to 161 (DVNITLSMALGVFILIIFYSI), 206 to 226 (LFGNMYAGELIFILIAGLLPW), and 237 to 257 (AIFHILIITLQAFIFMVLTIV).

The protein belongs to the ATPase A chain family. F-type ATPases have 2 components, CF(1) - the catalytic core - and CF(0) - the membrane proton channel. CF(1) has five subunits: alpha(3), beta(3), gamma(1), delta(1), epsilon(1). CF(0) has three main subunits: a(1), b(2) and c(9-12). The alpha and beta chains form an alternating ring which encloses part of the gamma chain. CF(1) is attached to CF(0) by a central stalk formed by the gamma and epsilon chains, while a peripheral stalk is formed by the delta and b chains.

The protein localises to the cell inner membrane. Key component of the proton channel; it plays a direct role in the translocation of protons across the membrane. This is ATP synthase subunit a from Klebsiella pneumoniae subsp. pneumoniae (strain ATCC 700721 / MGH 78578).